The sequence spans 86 residues: uncharacterized protein (86 aa).

This is an uncharacterized protein from Helicobacter pylori (strain J99 / ATCC 700824) (Campylobacter pylori J99).